Consider the following 257-residue polypeptide: Phosphate import ATP-binding protein PstB (257 aa).

The ABC transporter domain maps to 11–252 (FNISRLYLYI…PKNELTEKYV (242 aa)). ATP is bound at residue 43 to 50 (GPSGSGKS).

The protein belongs to the ABC transporter superfamily. Phosphate importer (TC 3.A.1.7) family. In terms of assembly, the complex is composed of two ATP-binding proteins (PstB), two transmembrane proteins (PstC and PstA) and a solute-binding protein (PstS).

The protein resides in the cell membrane. The catalysed reaction is phosphate(out) + ATP + H2O = ADP + 2 phosphate(in) + H(+). Its function is as follows. Part of the ABC transporter complex PstSACB involved in phosphate import. Responsible for energy coupling to the transport system. This chain is Phosphate import ATP-binding protein PstB, found in Saccharolobus solfataricus (strain ATCC 35092 / DSM 1617 / JCM 11322 / P2) (Sulfolobus solfataricus).